Reading from the N-terminus, the 173-residue chain is Alpha-crystallin A chain (173 aa).

At Met-1 the chain carries N-acetylmethionine. Residues 1-63 (MDIAIQHPWF…RSVLDSGISE (63 aa)) are required for complex formation with BFSP1 and BFSP2. Gln-6 is subject to Deamidated glutamine; partial. At Ser-45 the chain carries Phosphoserine. Gln-50 is modified (deamidated glutamine; partial). The 111-residue stretch at 52–162 (LFRSVLDSGI…GHSERAIPVS (111 aa)) folds into the sHSP domain. Lys-70 is subject to N6-acetyllysine. At Gln-90 the chain carries Deamidated glutamine; partial. N6-acetyllysine is present on Lys-99. His-100 is a binding site for Zn(2+). The residue at position 101 (Asn-101) is a Deamidated asparagine; partial. Zn(2+)-binding residues include Glu-102 and His-107. Residue Ser-122 is modified to Phosphoserine. Position 123 is a deamidated asparagine; partial (Asn-123). Residues 144 to 173 (PKVTSGMDAGHSERAIPVSREEKPSSAPSS) are disordered. Positions 153–167 (GHSERAIPVSREEKP) are enriched in basic and acidic residues. Position 154 (His-154) interacts with Zn(2+). Ser-162 is a glycosylation site (O-linked (GlcNAc) serine).

Belongs to the small heat shock protein (HSP20) family. In terms of assembly, heteromer composed of three CRYAA and one CRYAB subunits. Inter-subunit bridging via zinc ions enhances stability, which is crucial as there is no protein turn over in the lens. Can also form homodimers and homotetramers (dimers of dimers) which serve as the building blocks of homooligomers. Within homooligomers, the zinc-binding motif is created from residues of 3 different molecules. His-100 and Glu-102 from one molecule are ligands of the zinc ion, and His-107 and His-154 residues from additional molecules complete the site with tetrahedral coordination geometry. Part of a complex required for lens intermediate filament formation composed of BFSP1, BFSP2 and CRYAA. In terms of processing, acetylation at Lys-70 may increase chaperone activity. Undergoes age-dependent proteolytical cleavage at the C-terminus.

It localises to the cytoplasm. The protein localises to the nucleus. Functionally, contributes to the transparency and refractive index of the lens. Acts as a chaperone, preventing aggregation of various proteins under a wide range of stress conditions. Required for the correct formation of lens intermediate filaments as part of a complex composed of BFSP1, BFSP2 and CRYAA. The sequence is that of Alpha-crystallin A chain (CRYAA) from Phocoena phocoena (Harbor porpoise).